The following is a 180-amino-acid chain: Beta-lactoglobulin (180 aa).

Residues 1–18 form the signal peptide; that stretch reads MKCLLLALGLALACAAQA. Cystine bridges form between cysteine 84–cysteine 178, cysteine 124–cysteine 137, and cysteine 124–cysteine 139.

The protein belongs to the calycin superfamily. Lipocalin family. In terms of assembly, under physiological conditions beta-lactoglobulin exists as an equilibrium mixture of monomeric and dimeric forms. Interaction with LMBR1L is controversial. In terms of processing, alternate disulfide bonds occur in equal amounts. As to expression, synthesized in mammary gland and secreted in milk.

Its subcellular location is the secreted. Its function is as follows. Primary component of whey, it binds retinol and is probably involved in the transport of that molecule. In Bubalus bubalis (Domestic water buffalo), this protein is Beta-lactoglobulin (LGB).